A 319-amino-acid chain; its full sequence is Ribosomal protein uL3 glutamine methyltransferase (319 aa).

This sequence belongs to the protein N5-glutamine methyltransferase family. PrmB subfamily.

The catalysed reaction is L-glutaminyl-[ribosomal protein uL3] + S-adenosyl-L-methionine = N(5)-methyl-L-glutaminyl-[ribosomal protein uL3] + S-adenosyl-L-homocysteine + H(+). In terms of biological role, methylates large ribosomal subunit protein uL3 on a specific glutamine residue. The protein is Ribosomal protein uL3 glutamine methyltransferase of Bradyrhizobium diazoefficiens (strain JCM 10833 / BCRC 13528 / IAM 13628 / NBRC 14792 / USDA 110).